The primary structure comprises 91 residues: Acylphosphatase (91 aa).

One can recognise an Acylphosphatase-like domain in the interval Thr-3 to Tyr-91. Active-site residues include Arg-18 and Asn-36.

This sequence belongs to the acylphosphatase family.

The enzyme catalyses an acyl phosphate + H2O = a carboxylate + phosphate + H(+). In Lactobacillus johnsonii (strain CNCM I-12250 / La1 / NCC 533), this protein is Acylphosphatase (acyP).